We begin with the raw amino-acid sequence, 162 residues long: Transcription elongation factor GreA (162 aa).

Positions 48 to 76 form a coiled coil; that stretch reads NSEYQSAKDEQAFVEGRVKQLQQMIQFAQ. Residues 111–132 are disordered; the sequence is GSAESDPLSGKISNDSPMGKAL.

Belongs to the GreA/GreB family.

Functionally, necessary for efficient RNA polymerase transcription elongation past template-encoded arresting sites. The arresting sites in DNA have the property of trapping a certain fraction of elongating RNA polymerases that pass through, resulting in locked ternary complexes. Cleavage of the nascent transcript by cleavage factors such as GreA or GreB allows the resumption of elongation from the new 3'terminus. GreA releases sequences of 2 to 3 nucleotides. The sequence is that of Transcription elongation factor GreA from Oenococcus oeni (strain ATCC BAA-331 / PSU-1).